Here is a 708-residue protein sequence, read N- to C-terminus: ATP-dependent DNA helicase Hel308 (708 aa).

The Q motif motif lies at Met-1 to Thr-29. ATP-binding positions include Gln-28 and Ser-46–Thr-53. The Helicase ATP-binding domain occupies Lys-33–Asn-196. The short motif at Asp-145–His-148 is the DEAH box element. The Helicase C-terminal domain maps to His-229–Gly-435.

Belongs to the helicase family. Hel308 subfamily. Monomer.

It catalyses the reaction Couples ATP hydrolysis with the unwinding of duplex DNA by translocating in the 3'-5' direction.. The enzyme catalyses ATP + H2O = ADP + phosphate + H(+). Functionally, DNA-dependent ATPase and 3'-5' DNA helicase that may be involved in repair of stalled replication forks. The chain is ATP-dependent DNA helicase Hel308 from Saccharolobus solfataricus (strain ATCC 35092 / DSM 1617 / JCM 11322 / P2) (Sulfolobus solfataricus).